Reading from the N-terminus, the 421-residue chain is MAFRVPNSSLLSLILLSLLAIASAKVFFEERFEDGWDKRWVTSEWKKDENLAGEWNYTSGKWNGDPNDKGIQTSEDYRFYAISAEFPEFSNKDKTLVFQFSVKHEQKLDCGGGYIKLLSGDVDQKKFGGDTPYSIMFGPDICGYSTKKVHAILNYNNTNNLIKKDVPCETDQLTHVYTFIIRPDATYSILIDNLEKQTGSLYSDWDLLPAKKIKDPEAKKPEDWEDQEYIPDPEDKKPEGYDDIPKEITDPDAKKPEDWDDEEDGEWTAPTIPNPEYKGEWKPKKIKNPNFKGKWKAPLIDNPEFKDDPELYVYPNLKYVGIELWQVKSGTLFDNILITDEPEYAKQLAEETWGKQKDAEKAAFEELEKKLQEEESKEDPVDSDAEDDDNEAEDGEESDSESKPDSTEESAETEAEKHDEL.

The first 22 residues, 1–22 (MAFRVPNSSLLSLILLSLLAIA), serve as a signal peptide directing secretion. An N-linked (GlcNAc...) asparagine glycan is attached at asparagine 56. Cysteine 110 and cysteine 142 are oxidised to a cystine. Positions 114, 116, 133, and 140 each coordinate an alpha-D-glucoside. An N-linked (GlcNAc...) asparagine glycan is attached at asparagine 156. 7 consecutive repeat copies span residues 196–207 (KQTGSLYSDWDL), 215–226 (DPEAKKPEDWED), 232–243 (DPEDKKPEGYDD), 250–261 (DPDAKKPEDWDD), 265–275 (GEWTAPTIPNP), 279–289 (GEWKPKKIKNP), and 293–303 (GKWKAPLIDNP). The tract at residues 196–261 (KQTGSLYSDW…DAKKPEDWDD (66 aa)) is 4 X approximate repeats. The segment at 217-283 (EAKKPEDWED…NPEYKGEWKP (67 aa)) is disordered. Over residues 223–232 (DWEDQEYIPD) the composition is skewed to acidic residues. The segment covering 233–257 (PEDKKPEGYDDIPKEITDPDAKKPE) has biased composition (basic and acidic residues). The 3 X approximate repeats stretch occupies residues 265–303 (GEWTAPTIPNPEYKGEWKPKKIKNPNFKGKWKAPLIDNP). An an alpha-D-glucoside-binding site is contributed by glutamate 323. Over residues 350 to 380 (EETWGKQKDAEKAAFEELEKKLQEEESKEDP) the composition is skewed to basic and acidic residues. The interval 350-421 (EETWGKQKDA…ETEAEKHDEL (72 aa)) is disordered. Over residues 381-399 (VDSDAEDDDNEAEDGEESD) the composition is skewed to acidic residues. The short motif at 418-421 (HDEL) is the Prevents secretion from ER element.

Belongs to the calreticulin family.

The protein resides in the endoplasmic reticulum lumen. Functionally, molecular calcium-binding chaperone promoting folding, oligomeric assembly and quality control in the ER via the calreticulin/calnexin cycle. This lectin may interact transiently with almost all of the monoglucosylated glycoproteins that are synthesized in the ER. This Prunus armeniaca (Apricot) protein is Calreticulin.